Consider the following 2544-residue polypeptide: Highly reducing polyketide synthase pkhB (2544 aa).

A Ketosynthase family 3 (KS3) domain is found at 9–438; the sequence is SEPIAIIGMS…GTNAHVILES (430 aa). Residues Cys182, His317, and His358 each act as for beta-ketoacyl synthase activity in the active site. The segment at 566–876 is malonyl-CoA:ACP transacylase (MAT) domain; it reads VFTGQVFRRS…PYWGCLVRDE (311 aa). The tract at residues 948–1082 is N-terminal hotdog fold; that stretch reads HELLGMPVAG…GMVGIEESAV (135 aa). The dehydratase (DH) domain stretch occupies residues 948-1252; the sequence is HELLGMPVAG…VELAALGRGS (305 aa). Residues 948–1254 enclose the PKS/mFAS DH domain; it reads HELLGMPVAG…LAALGRGSSA (307 aa). The active-site Proton acceptor; for dehydratase activity is His980. The interval 1095–1254 is C-terminal hotdog fold; the sequence is YTRQPNPQDL…LAALGRGSSA (160 aa). Asp1165 serves as the catalytic Proton donor; for dehydratase activity. The segment at 1398–1573 is methyltransferase (CMet) domain; the sequence is SSLRQLSALL…FSGLDLEIYD (176 aa). The enoyl reductase (ER) domain stretch occupies residues 1826–2142; it reads GHLGTLAFAE…TGDQMGKVVL (317 aa). Residues 2169 to 2356 are ketoreductase (KR) domain; the sequence is ASYLIVGGVG…GVAIDLGPIS (188 aa). One can recognise a Carrier domain in the interval 2462 to 2539; sequence EGARLIGAAI…ALAGLVAEKS (78 aa). O-(pantetheine 4'-phosphoryl)serine is present on Ser2499.

Pantetheine 4'-phosphate is required as a cofactor.

It functions in the pathway secondary metabolite biosynthesis. In terms of biological role, highly reducing polyketide synthase; part of the pkh gene cluster that mediates the biosynthesis of 2,4-dihydroxy-6-[(3E,5E,7E)-2-oxonona-3,5,7-trienyl]benzaldehyde. The highly reducing polyketide synthase pkhB first produces the (2E,4E,6E)-octa-2,4,6-trienyl strater unit for the non-reducing polyketide synthase pkhA. This octatrienoyl starter is then loaded onto the SAT domain of the NR-PKS pkhA to be condensed with 4 malonyl-CoA units to yield 2,4-dihydroxy-6-[(3E,5E,7E)-2-oxonona-3,5,7-trienyl]benzaldehyde. The chain is Highly reducing polyketide synthase pkhB from Emericella nidulans (strain FGSC A4 / ATCC 38163 / CBS 112.46 / NRRL 194 / M139) (Aspergillus nidulans).